Here is a 605-residue protein sequence, read N- to C-terminus: Zinc metalloproteinase-disintegrin-like BfMP (605 aa).

The signal sequence occupies residues 1-11; the sequence is MLVVFPYQGSS. A propeptide spanning residues 12 to 179 is cleaved from the precursor; that stretch reads IILESGNVND…WESDEPFKNT (168 aa). N-linked (GlcNAc...) asparagine glycosylation is found at asparagine 178 and asparagine 215. The region spanning 196–392 is the Peptidase M12B domain; it reads KYIEFYVAVD…DRPQCILNKP (197 aa). Cystine bridges form between cysteine 307–cysteine 387, cysteine 347–cysteine 371, cysteine 350–cysteine 355, cysteine 403–cysteine 432, cysteine 414–cysteine 427, cysteine 416–cysteine 422, cysteine 426–cysteine 449, cysteine 440–cysteine 446, cysteine 445–cysteine 471, cysteine 458–cysteine 478, cysteine 465–cysteine 497, cysteine 490–cysteine 502, cysteine 509–cysteine 559, cysteine 524–cysteine 567, cysteine 537–cysteine 547, cysteine 554–cysteine 593, and cysteine 587–cysteine 598. A Zn(2+)-binding site is contributed by histidine 332. The active site involves glutamate 333. Zn(2+) contacts are provided by histidine 336 and histidine 342. The 87-residue stretch at 400–486 folds into the Disintegrin domain; it reads PAICGNYFVE…ECPTDIFRRN (87 aa). The D/ECD-tripeptide motif lies at 464–466; that stretch reads DCD.

This sequence belongs to the venom metalloproteinase (M12B) family. P-III subfamily. P-IIIa sub-subfamily. Monomer. Zn(2+) is required as a cofactor. Expressed by the venom gland.

It localises to the secreted. Snake venom zinc metalloproteinase that inhibits platelet aggregation and degrades fibrinogen. In Bungarus fasciatus (Banded krait), this protein is Zinc metalloproteinase-disintegrin-like BfMP.